A 532-amino-acid polypeptide reads, in one-letter code: Cytochrome P450 12b1, mitochondrial (532 aa).

C480 is a heme binding site.

This sequence belongs to the cytochrome P450 family. Requires heme as cofactor.

It is found in the mitochondrion. Its function is as follows. Probably involved in steroid hormones biosynthesis. In Drosophila acanthoptera (Fruit fly), this protein is Cytochrome P450 12b1, mitochondrial (Cyp12b1).